The primary structure comprises 440 residues: Phosphatidylcholine-sterol acyltransferase (440 aa).

Positions 1–24 (MGPPGSPWQWVLLLLGLLLPPAAP) are cleaved as a signal peptide. The N-linked (GlcNAc...) asparagine glycan is linked to Asn-44. Residues Cys-74 and Cys-98 are joined by a disulfide bond. The N-linked (GlcNAc...) asparagine glycan is linked to Asn-108. Catalysis depends on Ser-205, which acts as the Nucleophile. Asn-296 is a glycosylation site (N-linked (GlcNAc...) asparagine). Cys-337 and Cys-380 are disulfide-bonded. Catalysis depends on charge relay system residues Asp-369 and His-401. N-linked (GlcNAc...) asparagine glycosylation is present at Asn-408.

Belongs to the AB hydrolase superfamily. Lipase family. In terms of tissue distribution, detected in blood plasma (at protein level). Highly expressed in liver.

Its subcellular location is the secreted. The enzyme catalyses a sterol + a 1,2-diacyl-sn-glycero-3-phosphocholine = a sterol ester + a 1-acyl-sn-glycero-3-phosphocholine. The catalysed reaction is a 1-O-alkyl-2-acetyl-sn-glycero-3-phosphocholine + H2O = a 1-O-alkyl-sn-glycero-3-phosphocholine + acetate + H(+). It carries out the reaction a 1-hexadecanoyl-2-acyl-sn-glycero-3-phosphocholine + (24S)-hydroxycholesterol = (24S)-24-hydroxycholesterol ester + 1-hexadecanoyl-sn-glycero-3-phosphocholine. It catalyses the reaction (24S)-hydroxycholesterol + 1-hexadecanoyl-2-(9Z,12Z-octadecadienoyl)-sn-glycero-3-phosphocholine = (24S)-hydroxycholesterol 3-linoleoate + 1-hexadecanoyl-sn-glycero-3-phosphocholine. The enzyme catalyses 1-hexadecanoyl-2-(5Z,8Z,11Z,14Z-eicosatetraenoyl)-sn-glycero-3-phosphocholine + cholesterol = cholesteryl (5Z,8Z,11Z,14Z)-eicosatetraenoate + 1-hexadecanoyl-sn-glycero-3-phosphocholine. The catalysed reaction is 1-hexadecanoyl-2-(9Z-octadecenoyl)-sn-glycero-3-phosphocholine + cholesterol = cholesteryl (9Z-octadecenoate) + 1-hexadecanoyl-sn-glycero-3-phosphocholine. It carries out the reaction 1-hexadecanoyl-2-(8Z,11Z,14Z-eicosatrienoyl)-sn-glycero-3-phosphocholine + cholesterol = cholesteryl (8Z,11Z,14Z)-eicosatrienoate + 1-hexadecanoyl-sn-glycero-3-phosphocholine. It catalyses the reaction 1-hexadecanoyl-2-(5Z,8Z,11Z-eicosatrienoyl)-sn-glycero-3-phosphocholine + cholesterol = cholesteryl (5Z,8Z,11Z)-eicosatrienoate + 1-hexadecanoyl-sn-glycero-3-phosphocholine. The enzyme catalyses 1-hexadecanoyl-2-(5Z,8Z,11Z,14Z,17Z-eicosapentaenoyl)-sn-glycero-3-phosphocholine + cholesterol = (5Z,8Z,11Z,14Z,17Z-eicosapentaenoyl)-cholesterol + 1-hexadecanoyl-sn-glycero-3-phosphocholine. The catalysed reaction is 1-hexadecanoyl-2-(9Z,12Z-octadecadienoyl)-sn-glycero-3-phosphocholine + cholesterol = cholesteryl (9Z,12Z)-octadecadienoate + 1-hexadecanoyl-sn-glycero-3-phosphocholine. It carries out the reaction 1-hexadecanoyl-2-(6Z,9Z,12Z-octadecatrienoyl)-sn-glycero-3-phosphocholine + cholesterol = (6Z,9Z,12Z-octadecatrienoyl)-cholesterol + 1-hexadecanoyl-sn-glycero-3-phosphocholine. It catalyses the reaction 1-hexadecanoyl-2-(11Z,14Z,17Z-eicosatrienoyl)-sn-glycero-3-phosphocholine + cholesterol = (11Z,14Z,17Z-eicosatrienoyl)-cholesterol + 1-hexadecanoyl-sn-glycero-3-phosphocholine. The enzyme catalyses 1-hexadecanoyl-2-(9Z,12Z,15Z-octadecatrienoyl)-sn-glycero-3-phosphocholine + cholesterol = (9Z,12Z,15Z-octadecatrienoyl)-cholesterol + 1-hexadecanoyl-sn-glycero-3-phosphocholine. The catalysed reaction is 1-hexadecanoyl-2-(9Z,12Z-octadecadienoyl)-sn-glycero-3-phosphocholine + H2O = (9Z,12Z)-octadecadienoate + 1-hexadecanoyl-sn-glycero-3-phosphocholine + H(+). It carries out the reaction 1-hexadecanoyl-2-(5Z,8Z,11Z,14Z-eicosatetraenoyl)-sn-glycero-3-phosphocholine + H2O = 1-hexadecanoyl-sn-glycero-3-phosphocholine + (5Z,8Z,11Z,14Z)-eicosatetraenoate + H(+). It catalyses the reaction a 1-O-alkyl-2-acetyl-sn-glycero-3-phosphocholine + 1-hexadecanoyl-sn-glycero-3-phosphocholine = 1-hexadecanoyl-2-acetyl-sn-glycero-3-phosphocholine + a 1-O-alkyl-sn-glycero-3-phosphocholine. In terms of biological role, central enzyme in the extracellular metabolism of plasma lipoproteins. Synthesized mainly in the liver and secreted into plasma where it converts cholesterol and phosphatidylcholines (lecithins) to cholesteryl esters and lysophosphatidylcholines on the surface of high and low density lipoproteins (HDLs and LDLs). The cholesterol ester is then transported back to the liver. Also produced in the brain by primary astrocytes, and esterifies free cholesterol on nascent APOE-containing lipoproteins secreted from glia and influences cerebral spinal fluid (CSF) APOE- and APOA1 levels. Together with APOE and the cholesterol transporter ABCA1, plays a key role in the maturation of glial-derived, nascent lipoproteins. Required for remodeling high-density lipoprotein particles into their spherical forms. Has a preference for plasma 16:0-18:2 or 18:O-18:2 phosphatidylcholines. Catalyzes the hydrolysis of 1-O-alkyl-2-acetyl-sn-glycero-3-phosphocholine (platelet-activating factor or PAF) to 1-O-alkyl-sn-glycero-3-phosphocholine (lyso-PAF). Also catalyzes the transfer of the acetate group from PAF to 1-hexadecanoyl-sn-glycero-3-phosphocholine forming lyso-PAF. Catalyzes the esterification of (24S)-hydroxycholesterol (24(S)OH-C), also known as cerebrosterol to produce 24(S)OH-C monoesters. The protein is Phosphatidylcholine-sterol acyltransferase (LCAT) of Oryctolagus cuniculus (Rabbit).